The chain runs to 783 residues: Ubiquitin carboxyl-terminal hydrolase 1 (783 aa).

2 disordered regions span residues 1–22 (MPGV…KKNR) and 34–55 (KRAL…YKGS). Over residues 7 to 16 (SESNGLSRGS) the composition is skewed to polar residues. Phosphoserine occurs at positions 16 and 42. Residues 45–55 (NEEKTSEYKGS) show a composition bias toward basic and acidic residues. Ser-67 is modified (phosphoserine). One can recognise a USP domain in the interval 81-783 (VGLNNLGNTC…TPYLLFYKKL (703 aa)). Cys-90 serves as the catalytic Nucleophile. Residues 234–311 (EEYQKEEMSD…RKAAGDTLEI (78 aa)) are disordered. Composition is skewed to basic and acidic residues over residues 250–273 (DNMR…KSDA) and 284–296 (ISKE…ENQR). At Ser-473 the chain carries Phosphoserine. The active-site Proton acceptor is the His-591. Residues 685–722 (PDKVASTALPENRNSETNNTNGTDESDSNKESSDQTGI) are disordered. Position 766 is a phosphoserine (Ser-766).

The protein belongs to the peptidase C19 family. In terms of assembly, interacts with FANCD2 and PCNA. Interacts with WDR48. Interacts with ATAD5; the interaction regulates USP1-mediated PCNA deubiquitination. Post-translationally, autocatalytic cleavage of USP1 following UV irradiation inactivates it, leading to an increase in ubiquitinated PCNA, recruitment of POLH and translesion synthesis. In terms of processing, ubiquitinated by the CRL2(KLHDC2) complex following autocatalytic cleavage, leading to its degradation: the CRL2(KLHDC2) complex recognizes the diglycine (Gly-Gly) at the C-terminus.

Its subcellular location is the nucleus. The catalysed reaction is Thiol-dependent hydrolysis of ester, thioester, amide, peptide and isopeptide bonds formed by the C-terminal Gly of ubiquitin (a 76-residue protein attached to proteins as an intracellular targeting signal).. Functionally, negative regulator of DNA damage repair which specifically deubiquitinates monoubiquitinated FANCD2. Also involved in PCNA-mediated translesion synthesis (TLS) by deubiquitinating monoubiquitinated PCNA. Has almost no deubiquitinating activity by itself and requires the interaction with WDR48 to have a high activity. This chain is Ubiquitin carboxyl-terminal hydrolase 1, found in Bos taurus (Bovine).